A 111-amino-acid polypeptide reads, in one-letter code: uncharacterized protein (111 aa).

Positions isoleucine 4–alanine 111 constitute an HIT domain. The short motif at histidine 96–histidine 100 is the Histidine triad motif element.

This is an uncharacterized protein from Chlamydia trachomatis serovar D (strain ATCC VR-885 / DSM 19411 / UW-3/Cx).